A 204-amino-acid polypeptide reads, in one-letter code: MRG/MORF4L-binding protein (204 aa).

A compositionally biased stretch (gly residues) spans 1-15 (MGEAEVGGTGAPGDK). Positions 1 to 27 (MGEAEVGGTGAPGDKGPGEAAPSPAEE) are disordered. An N-acetylglycine modification is found at Gly-2. Phosphoserine is present on Ser-23. Lys-127 participates in a covalent cross-link: Glycyl lysine isopeptide (Lys-Gly) (interchain with G-Cter in SUMO2). 2 stretches are compositionally biased toward basic and acidic residues: residues 128–140 (EEMKEDVDPHSGA) and 153–175 (ALEKSSKDKEKNSSDLGCKEGAD). The tract at residues 128–204 (EEMKEDVDPH…SPSAAKRRRT (77 aa)) is disordered. A compositionally biased stretch (low complexity) spans 189-198 (ANSNPSSPSA). Phosphoserine is present on residues Ser-191 and Ser-195.

Belongs to the EAF7 family. Component of the NuA4 histone acetyltransferase complex which contains the catalytic subunit KAT5/TIP60 and the subunits EP400, TRRAP/PAF400, BRD8/SMAP, EPC1, DMAP1/DNMAP1, RUVBL1/TIP49, RUVBL2, ING3, actin, ACTL6A/BAF53A, MORF4L1/MRG15, MORF4L2/MRGX, MRGBP, YEATS4/GAS41, VPS72/YL1 and MEAF6. MRGBP may interact directly with MORF4L1/MRG15 and MORF4L2/MRGX.

The protein localises to the nucleus. Component of the NuA4 histone acetyltransferase (HAT) complex which is involved in transcriptional activation of select genes principally by acetylation of nucleosomal histones H4 and H2A. This modification may both alter nucleosome - DNA interactions and promote interaction of the modified histones with other proteins which positively regulate transcription. This complex may be required for the activation of transcriptional programs associated with oncogene and proto-oncogene mediated growth induction, tumor suppressor mediated growth arrest and replicative senescence, apoptosis, and DNA repair. NuA4 may also play a direct role in DNA repair when recruited to sites of DNA damage. This is MRG/MORF4L-binding protein (Mrgbp) from Mus musculus (Mouse).